The primary structure comprises 391 residues: tRNA(Met) cytidine acetate ligase (391 aa).

Residues 7-20 (IAEY…HIYQ), Gly-101, Asn-153, and Arg-178 contribute to the ATP site.

It belongs to the TmcAL family.

It is found in the cytoplasm. It catalyses the reaction cytidine(34) in elongator tRNA(Met) + acetate + ATP = N(4)-acetylcytidine(34) in elongator tRNA(Met) + AMP + diphosphate. Catalyzes the formation of N(4)-acetylcytidine (ac(4)C) at the wobble position of elongator tRNA(Met), using acetate and ATP as substrates. First activates an acetate ion to form acetyladenylate (Ac-AMP) and then transfers the acetyl group to tRNA to form ac(4)C34. In Latilactobacillus sakei subsp. sakei (strain 23K) (Lactobacillus sakei subsp. sakei), this protein is tRNA(Met) cytidine acetate ligase.